Reading from the N-terminus, the 690-residue chain is DNA ligase (690 aa).

NAD(+) contacts are provided by residues D36–D40, S85–L86, and E124. The active-site N6-AMP-lysine intermediate is the K126. The NAD(+) site is built by R147, E184, K308, and K332. Residues C426, C429, C444, and C449 each contribute to the Zn(2+) site. Residues N614–L690 form the BRCT domain.

The protein belongs to the NAD-dependent DNA ligase family. LigA subfamily. Mg(2+) is required as a cofactor. The cofactor is Mn(2+).

It carries out the reaction NAD(+) + (deoxyribonucleotide)n-3'-hydroxyl + 5'-phospho-(deoxyribonucleotide)m = (deoxyribonucleotide)n+m + AMP + beta-nicotinamide D-nucleotide.. Its function is as follows. DNA ligase that catalyzes the formation of phosphodiester linkages between 5'-phosphoryl and 3'-hydroxyl groups in double-stranded DNA using NAD as a coenzyme and as the energy source for the reaction. It is essential for DNA replication and repair of damaged DNA. The sequence is that of DNA ligase from Prochlorococcus marinus (strain NATL2A).